The primary structure comprises 197 residues: RNA pyrophosphohydrolase (197 aa).

The region spanning 6–149 (GYRPNVGIVI…KRDVYRRAMK (144 aa)) is the Nudix hydrolase domain. The Nudix box motif lies at 38–59 (GGINEGETPEQAMFRELFEEVG). The tract at residues 170-197 (ETKKAETGKKQPYYHKYAPQNKKGRKRR) is disordered.

It belongs to the Nudix hydrolase family. RppH subfamily. It depends on a divalent metal cation as a cofactor.

In terms of biological role, accelerates the degradation of transcripts by removing pyrophosphate from the 5'-end of triphosphorylated RNA, leading to a more labile monophosphorylated state that can stimulate subsequent ribonuclease cleavage. This Actinobacillus succinogenes (strain ATCC 55618 / DSM 22257 / CCUG 43843 / 130Z) protein is RNA pyrophosphohydrolase.